Reading from the N-terminus, the 157-residue chain is Ubiquitin-like protein 4A (157 aa).

The region spanning 1-76 (MQLTVKALQG…LNLVVKPLEK (76 aa)) is the Ubiquitin-like domain. Residue K48 forms a Glycyl lysine isopeptide (Lys-Gly) (interchain with G-Cter in ubiquitin) linkage. S90 carries the phosphoserine modification. A required and sufficient for interaction with BAG6 region spans residues 96 to 138 (WQLISKVLARHFSAADASRVLEQPQRDYERSLSRLTLDDIERL).

As to quaternary structure, component of the BAG6/BAT3 complex, at least composed of BAG6, UBL4A and GET4/TRC35. Interacts with BAG6; the interaction is direct and required for UBL4A protein stability. Interacts with USP13; may be indirect via BAG6. In terms of processing, polyubiquitinated. Ubiquitination by AMFR and deubiquitination by USP13 may regulate the interaction between the BAG6/BAT complex and SGTA and therefore may regulate client proteins fate.

Its subcellular location is the cytoplasm. The protein resides in the cytosol. It is found in the nucleus. As part of a cytosolic protein quality control complex, the BAG6/BAT3 complex, maintains misfolded and hydrophobic patches-containing proteins in a soluble state and participates in their proper delivery to the endoplasmic reticulum or alternatively can promote their sorting to the proteasome where they undergo degradation. The BAG6/BAT3 complex is involved in the post-translational delivery of tail-anchored/type II transmembrane proteins to the endoplasmic reticulum membrane. Recruited to ribosomes, it interacts with the transmembrane region of newly synthesized tail-anchored proteins and together with SGTA and ASNA1 mediates their delivery to the endoplasmic reticulum. Client proteins that cannot be properly delivered to the endoplasmic reticulum are ubiquitinated and sorted to the proteasome. Similarly, the BAG6/BAT3 complex also functions as a sorting platform for proteins of the secretory pathway that are mislocalized to the cytosol either delivering them to the proteasome for degradation or to the endoplasmic reticulum. The BAG6/BAT3 complex also plays a role in the endoplasmic reticulum-associated degradation (ERAD), a quality control mechanism that eliminates unwanted proteins of the endoplasmic reticulum through their retrotranslocation to the cytosol and their targeting to the proteasome. It maintains these retrotranslocated proteins in an unfolded yet soluble state condition in the cytosol to ensure their proper delivery to the proteasome. The protein is Ubiquitin-like protein 4A (UBL4A) of Pongo abelii (Sumatran orangutan).